The sequence spans 206 residues: Small ribosomal subunit protein uS4 (206 aa).

In terms of domain architecture, S4 RNA-binding spans 96-156; it reads GRLDNVVYRM…EKSKKQARIK (61 aa).

The protein belongs to the universal ribosomal protein uS4 family. Part of the 30S ribosomal subunit. Contacts protein S5. The interaction surface between S4 and S5 is involved in control of translational fidelity.

Functionally, one of the primary rRNA binding proteins, it binds directly to 16S rRNA where it nucleates assembly of the body of the 30S subunit. Its function is as follows. With S5 and S12 plays an important role in translational accuracy. The chain is Small ribosomal subunit protein uS4 from Histophilus somni (strain 2336) (Haemophilus somnus).